The primary structure comprises 251 residues: MSFYVVVPARYASTRLPGKPLADIAGKTMVERVAQRCQQSDADQIYVATDDRRIADVLGDTVPVVMTREDHPSGTDRLQEVATKLALADDDIIVNVQGDEPLIPPAVINQVAANLAANPDCQMATLCEAIENSDDLFNPNVVKAVFDNRGKALYFSRAPVPWHRDAFADGQQDLSGGQWWRHIGIYAYRVAFLHQYVQWQPATLEKLESLEQLRAMANGVAIHVEPACEVVPGGVDTQTDLERLRAQLGGQ.

Belongs to the KdsB family.

It localises to the cytoplasm. The catalysed reaction is 3-deoxy-alpha-D-manno-oct-2-ulosonate + CTP = CMP-3-deoxy-beta-D-manno-octulosonate + diphosphate. It functions in the pathway nucleotide-sugar biosynthesis; CMP-3-deoxy-D-manno-octulosonate biosynthesis; CMP-3-deoxy-D-manno-octulosonate from 3-deoxy-D-manno-octulosonate and CTP: step 1/1. Its pathway is bacterial outer membrane biogenesis; lipopolysaccharide biosynthesis. Activates KDO (a required 8-carbon sugar) for incorporation into bacterial lipopolysaccharide in Gram-negative bacteria. This is 3-deoxy-manno-octulosonate cytidylyltransferase from Alcanivorax borkumensis (strain ATCC 700651 / DSM 11573 / NCIMB 13689 / SK2).